A 397-amino-acid polypeptide reads, in one-letter code: 3-hydroxybenzoate 6-hydroxylase (397 aa).

Belongs to the 3-hydroxybenzoate 6-hydroxylase family. As to quaternary structure, monomer. Requires FAD as cofactor.

It catalyses the reaction 3-hydroxybenzoate + NADH + O2 + H(+) = 2,5-dihydroxybenzoate + NAD(+) + H2O. With respect to regulation, inhibited by copper, mercury and iron ions. In terms of biological role, catalyzes the NAD- or NADP-dependent conversion of 3-hydroxybenzoate to gentisate. NAD and NADP function equally well. The sequence is that of 3-hydroxybenzoate 6-hydroxylase (mhbM) from Klebsiella oxytoca.